Consider the following 386-residue polypeptide: Methylthioribose-1-phosphate isomerase (386 aa).

Asp-261 serves as the catalytic Proton donor.

The protein belongs to the eIF-2B alpha/beta/delta subunits family. MtnA subfamily.

The protein resides in the cytoplasm. Its subcellular location is the nucleus. It carries out the reaction 5-(methylsulfanyl)-alpha-D-ribose 1-phosphate = 5-(methylsulfanyl)-D-ribulose 1-phosphate. Its pathway is amino-acid biosynthesis; L-methionine biosynthesis via salvage pathway; L-methionine from S-methyl-5-thio-alpha-D-ribose 1-phosphate: step 1/6. In terms of biological role, catalyzes the interconversion of methylthioribose-1-phosphate (MTR-1-P) into methylthioribulose-1-phosphate (MTRu-1-P). This chain is Methylthioribose-1-phosphate isomerase, found in Paracoccidioides brasiliensis (strain Pb03).